We begin with the raw amino-acid sequence, 189 residues long: Inosine triphosphate pyrophosphatase (189 aa).

8 to 13 (TGNANK) is an ITP binding site. E39 lines the Mg(2+) pocket. Residues K51, 67 to 68 (DT), K84, 143 to 146 (FGWD), K167, and 172 to 173 (HR) each bind ITP.

Belongs to the HAM1 NTPase family. In terms of assembly, homodimer. The cofactor is Mg(2+). It depends on Mn(2+) as a cofactor.

The protein resides in the cytoplasm. Its subcellular location is the nucleus. It carries out the reaction ITP + H2O = IMP + diphosphate + H(+). The catalysed reaction is dITP + H2O = dIMP + diphosphate + H(+). The enzyme catalyses XTP + H2O = XMP + diphosphate + H(+). In terms of biological role, pyrophosphatase that hydrolyzes non-canonical purine nucleotides such as inosine triphosphate (ITP), deoxyinosine triphosphate (dITP) or xanthosine 5'-triphosphate (XTP) to their respective monophosphate derivatives. The enzyme does not distinguish between the deoxy- and ribose forms. Probably excludes non-canonical purines from RNA and DNA precursor pools, thus preventing their incorporation into RNA and DNA and avoiding chromosomal lesions. This Cryptococcus neoformans var. neoformans serotype D (strain JEC21 / ATCC MYA-565) (Filobasidiella neoformans) protein is Inosine triphosphate pyrophosphatase.